A 776-amino-acid chain; its full sequence is MQGCQAGASIFFLIAANPDANHGASGGLGSRWIRTFSRIAPAGTQGMAGPLRSRVEELKRPWWRESSPLVLQHSEAARLAADALLERGEAAYLQVISEERELPFLSALDVDYMISHVRGVPELSEAQGSETLGQDLSMLSEVTSGTYFPMASDLDPPDLDLGWPEVPQATGFSPTQAVVHFQRDKGKSIKDLLRFLFSQAQTVVAVVMDVFTDMELLCDLMEASSRRGVPVYLLLAQEHLKYFLEMCYKMDLNGGHLVNMRVRSTCGDTYCSKAGRRFTGQALEKFVIIDCEQVVAGSYSFTWLCSQAHTSMVLQLRGHIVEDFDREFRCLYAESQPVEGFCSNEDPLMPQVPRPPPVTLAFGPAVPSATGSSPSSNSLSSIKHSPLLARSSYLALPGGGGRNDMGMGSSSPGPAYHEAGGQPSLYRQLSDPNHISPPGPYRANLSKLGASPWSQSSPALNHSSTSPLTLAVGSPLLPSSRPLLHFTRGVPALSRLPENGLPASQDPSLPRGRWVPGTALETVEEKKVSLSQSHDHLDRLSPFSKAGEAGGPNSRVTPDSSSLQHRELALDDRRLSLSHSHSQLDLLSQGQGVLESGSLRPGELSLENRKLSLNHNHGQLDLLPQNPKPQAPKIPSDAYSSAGPSKPSLDDRRQTLGHSQLDLITKFGPFRSEGPGPSCPPEPSPVRMAGVGSADEKRLTLGHSKLDLITKYHQLQGARQKPEPGIPGAPVSGHQNGSSNDLFAPEKRLTLGHSKLDLITKYNKSKFKQLRSRFES.

The tract at residues 1 to 340 (MQGCQAGASI…LYAESQPVEG (340 aa)) is DUF1669. 5 disordered regions span residues 344–467 (NEDP…STSP), 494–565 (SRLP…SLQH), 617–653 (HGQL…DDRR), 669–694 (PFRS…VGSA), and 716–745 (QGAR…LFAP). The span at 368-385 (SATGSSPSSNSLSSIKHS) shows a compositional bias: low complexity. The segment covering 452–467 (PWSQSSPALNHSSTSP) has biased composition (polar residues). Residues 523–539 (VEEKKVSLSQSHDHLDR) are compositionally biased toward basic and acidic residues. The segment covering 554-563 (SRVTPDSSSL) has biased composition (polar residues).

It belongs to the FAM83 family. In terms of assembly, directly interacts (via DUF1669) with CSNK1A1 and CSNK1A1L. May interact with RAF1. In terms of processing, phosphorylated by CSNK1A1.

It is found in the cytoplasm. Functionally, may play a role in MAPK signaling. The sequence is that of Protein FAM83C from Mus musculus (Mouse).